The primary structure comprises 503 residues: Cytochrome P450 3A8 (503 aa).

Residue C442 participates in heme binding.

This sequence belongs to the cytochrome P450 family. Requires heme as cofactor.

The protein localises to the endoplasmic reticulum membrane. It is found in the microsome membrane. The catalysed reaction is an organic molecule + reduced [NADPH--hemoprotein reductase] + O2 = an alcohol + oxidized [NADPH--hemoprotein reductase] + H2O + H(+). Catalyzes nifedipine and nilvadipine oxidations. In Macaca fascicularis (Crab-eating macaque), this protein is Cytochrome P450 3A8 (CYP3A8).